The sequence spans 206 residues: Superoxide dismutase [Mn] (206 aa).

Residues His27, His82, Asp168, and His172 each contribute to the Mn(2+) site.

This sequence belongs to the iron/manganese superoxide dismutase family. In terms of assembly, homodimer. Mn(2+) serves as cofactor.

The enzyme catalyses 2 superoxide + 2 H(+) = H2O2 + O2. In terms of biological role, destroys superoxide anion radicals which are normally produced within the cells and which are toxic to biological systems. In Escherichia coli (strain K12), this protein is Superoxide dismutase [Mn] (sodA).